Here is a 336-residue protein sequence, read N- to C-terminus: Inositol 2-dehydrogenase (336 aa).

The protein belongs to the Gfo/Idh/MocA family. Homotetramer.

It carries out the reaction myo-inositol + NAD(+) = scyllo-inosose + NADH + H(+). Involved in the oxidation of myo-inositol (MI) to 2-keto-myo-inositol (2KMI or 2-inosose). The polypeptide is Inositol 2-dehydrogenase (Pseudomonas savastanoi pv. phaseolicola (strain 1448A / Race 6) (Pseudomonas syringae pv. phaseolicola (strain 1448A / Race 6))).